A 147-amino-acid polypeptide reads, in one-letter code: Hemoglobin subunit gamma (147 aa).

The Globin domain occupies 3–147 (NFTAEDKAAI…VASALASRYH (145 aa)). Residues His64 and His93 each contribute to the heme b site.

This sequence belongs to the globin family. In terms of assembly, heterotetramer of two alpha chains and two gamma chains in fetal hemoglobin (Hb F). As to expression, red blood cells.

Its function is as follows. Gamma chains make up the fetal hemoglobin F, in combination with alpha chains. This Callithrix jacchus (White-tufted-ear marmoset) protein is Hemoglobin subunit gamma (HBG1).